The following is a 496-amino-acid chain: Glutamyl-tRNA(Gln) amidotransferase subunit A (496 aa).

Residues Lys75 and Ser150 each act as charge relay system in the active site. Ser174 (acyl-ester intermediate) is an active-site residue.

Belongs to the amidase family. GatA subfamily. Heterotrimer of A, B and C subunits.

It catalyses the reaction L-glutamyl-tRNA(Gln) + L-glutamine + ATP + H2O = L-glutaminyl-tRNA(Gln) + L-glutamate + ADP + phosphate + H(+). Allows the formation of correctly charged Gln-tRNA(Gln) through the transamidation of misacylated Glu-tRNA(Gln) in organisms which lack glutaminyl-tRNA synthetase. The reaction takes place in the presence of glutamine and ATP through an activated gamma-phospho-Glu-tRNA(Gln). This is Glutamyl-tRNA(Gln) amidotransferase subunit A from Burkholderia vietnamiensis (strain G4 / LMG 22486) (Burkholderia cepacia (strain R1808)).